A 1269-amino-acid chain; its full sequence is MKNDVVRWSRQPTSNTTNSSSSSRSDSNSTHKHRSKSNKLNARQLGSNAARSCQQRSSVATTLEDEQQTIIECDIGNFNFDCNLFKTSFLTQHKQKRSGKSSSKSKSNRSRPLAKTKAVFLLALQFSAVVFLCNINVGFVAGSVATAASSAGGSSPAAPSSAPSSPPTVAVPPPPPPSSALKVDPNGQSPVLPPYVLDYETGGKAKLTPNNGKFGQSGSSGSNNNHIVGHYTHTWAVHIPNGDNGMADAVAKDHGFVNLGKIFDDHYHFAHHKVSKRSLSPATHHQTRLDDDDRVHWAKQQRAKSRSKRDFIRMRPSRTSSRAMSMVDAMSFNDSKWPQMWYLNRGGGLDMNVIPAWKMGITGKGVVVTILDDGLESDHPDIQDNYDPKASYDVNSHDDDPMPHYDMTDSNRHGTRCAGEVAATANNSFCAVGIAYGASVGGVRMLDGDVTDAVEARSLSLNPQHIDIYSASWGPDDDGKTVDGPGELASRAFIEGTTKGRGGKGSIFIWASGNGGREQDNCNCDGYTNSIWTLSISSATEEGHVPWYSEKCSSTLATTYSSGGQGEKQVVTTDLHHSCTVSHTGTSASAPLAAGIAALVLQSNQNLTWRDLQHIVVRTAKPANLKDPSWSRNGVGRRVSHSFGYGLMDAAEMVRVARNWKAVPEQQRCEINAPHVDKVIPPRTHITLQLTVNHCRSVNYLEHVQAKITLTSQRRGDIQLFLRSPANTSVTLLTPRIHDNSRSGFNQWPFMSVHTWGESPQGNWQLEIHNEGRYMGHALLREWSLIFYGTTQSIGPNDPISVPKPSGSEATTPNSSSTTSNLHQAYSPQYPRIPPNNFGSSPSGGSKLPLGKVPPPNKSSYVTNNPLLNSAPPKQGYQQISATYGVILGKANGKSNNNSKEKTNNKGNKSNNGNKGKSGGSSGNRKEQTTQSTIIQTSTSKNKYYRISQQQQQKNNKQDRNGVQTQRPKANSGEKSYDEKSRKVVGEITTNSGNGSIKAAKQVKESTTTSSNSRIPKLFERYEKIQAIFPELEPYENSSPKGKPKQAKQGKQFEVDLFKPTNGGNSRQGNTKKSPSVPPPSQTMATLSILPILPAGGSSFLPDQKILKKQQLLMAAAGVMAPAQVEVEMEEVHATPDYEARKDQRKEVNGPNAQITQWDMIFYGTETPAQPDDVANPSQSNQFNLYGNDMAHNDVEYDSTGQWRNMQQVGEVGMTRDHSNTAACLKWSDRKCLGLSLLFFMIMQVFFLNFKHANDNNNKNKNNIIKCIR.

The segment at 1 to 57 is disordered; that stretch reads MKNDVVRWSRQPTSNTTNSSSSSRSDSNSTHKHRSKSNKLNARQLGSNAARSCQQRS. The span at 13 to 28 shows a compositional bias: low complexity; that stretch reads TSNTTNSSSSSRSDSN. Residues N15, N18, and N28 are each glycosylated (N-linked (GlcNAc...) asparagine). The segment covering 38–57 has biased composition (polar residues); the sequence is NKLNARQLGSNAARSCQQRS. The N-linked (GlcNAc...) asparagine glycan is linked to N108. Residues 119 to 139 form a helical membrane-spanning segment; it reads VFLLALQFSAVVFLCNINVGF. A compositionally biased stretch (low complexity) spans 150-163; the sequence is SAGGSSPAAPSSAP. The tract at residues 150 to 187 is disordered; the sequence is SAGGSSPAAPSSAPSSPPTVAVPPPPPPSSALKVDPNG. Pro residues predominate over residues 164 to 178; it reads SSPPTVAVPPPPPPS. N333 carries an N-linked (GlcNAc...) asparagine glycan. Residues 340 to 654 form the Peptidase S8 domain; that stretch reads MWYLNRGGGL…YGLMDAAEMV (315 aa). Residues D372 and H413 each act as charge relay system in the active site. N426 is a glycosylation site (N-linked (GlcNAc...) asparagine). 2 cysteine pairs are disulfide-bonded: C430–C579 and C522–C552. The active-site Charge relay system is S587. N-linked (GlcNAc...) asparagine glycosylation occurs at N606. Residues 662 to 793 form the P/Homo B domain; that stretch reads AVPEQQRCEI…SLIFYGTTQS (132 aa). An intrachain disulfide couples C669 to C695. N-linked (GlcNAc...) asparagine glycosylation is found at N727 and N814. 4 disordered regions span residues 796 to 875, 891 to 1015, 1031 to 1050, and 1057 to 1083; these read PNDP…PPKQ, ANGK…NSRI, ELEP…AKQG, and LFKP…PSQT. 2 stretches are compositionally biased toward low complexity: residues 811-821 and 835-851; these read TTPNSSSTTSN and PNNF…LPLG. N-linked (GlcNAc...) asparagine glycosylation is present at N857. The span at 858-868 shows a compositional bias: polar residues; that stretch reads KSSYVTNNPLL. 2 N-linked (GlcNAc...) asparagine glycosylation sites follow: N897 and N908. Low complexity-rich tracts occupy residues 905–915 and 929–940; these read NKGNKSNNGNK and TTQSTIIQTSTS. The segment covering 975–985 has biased composition (basic and acidic residues); the sequence is KSYDEKSRKVV. A glycan (N-linked (GlcNAc...) asparagine) is linked at N994. The span at 1005 to 1014 shows a compositional bias: polar residues; that stretch reads ESTTTSSNSR. Polar residues predominate over residues 1062–1074; it reads NGGNSRQGNTKKS. The chain crosses the membrane as a helical span at residues 1233 to 1253; the sequence is LGLSLLFFMIMQVFFLNFKHA.

This sequence belongs to the peptidase S8 family. Furin subfamily. Ca(2+) is required as a cofactor. In adults, isoform 1-X is expressed in CNS, fat body and female reproductive tissues, and in embryos, in CNS, tracheal pits, hindgut, posterior spiracles and anal pads.

The protein resides in the golgi apparatus membrane. The enzyme catalyses Release of mature proteins from their proproteins by cleavage of -Arg-Xaa-Yaa-Arg-|-Zaa- bonds, where Xaa can be any amino acid and Yaa is Arg or Lys. Releases albumin, complement component C3 and von Willebrand factor from their respective precursors.. Its function is as follows. Furin is likely to represent the ubiquitous endoprotease activity within constitutive secretory pathways and capable of cleavage at the RX(K/R)R consensus motif. The chain is Furin-like protease 1, isoforms 1/1-X/2 (Fur1) from Drosophila melanogaster (Fruit fly).